Reading from the N-terminus, the 361-residue chain is MLNIGIFFGSKSVEHEISIITAQQVLSSIDRKKYNVIPIYISKSGEWFTGKVLEDLETFKDFDKLEKKAKKIDSFSVKNNKLLLKYGLKKQTIDFCFLVFHGTNGEDGTFQGMCEIFGIPYSGCNHFSSAFTMDKVVTKLLLKEKEISVVDFEYTTEINEEFFKRCEKNLGYPMIVKPARLGSSIGVSKVVDRKNFEEAVKNVLLFDNKVLVEKWINAREINCAVMGYKNIFVSELEEINKKNDFFNFEEKYFKKGKKFSNHIIPARIDENLKNKIKEIAKDTFKILECSGNVRIDFLIADKIYVNEINTIPGALSFYIWQKSGFTFSQIIDNMINMGLERFKDKKIVSIDTNILKIKVGK.

Residues 139 to 336 enclose the ATP-grasp domain; sequence KLLLKEKEIS…FSQIIDNMIN (198 aa). 167–222 is an ATP binding site; sequence EKNLGYPMIVKPARLGSSIGVSKVVDRKNFEEAVKNVLLFDNKVLVEKWINAREIN. Residues aspartate 296, glutamate 307, and asparagine 309 each coordinate Mg(2+).

Belongs to the D-alanine--D-alanine ligase family. Mg(2+) serves as cofactor. Requires Mn(2+) as cofactor.

The protein localises to the cytoplasm. It catalyses the reaction 2 D-alanine + ATP = D-alanyl-D-alanine + ADP + phosphate + H(+). It functions in the pathway cell wall biogenesis; peptidoglycan biosynthesis. In terms of biological role, cell wall formation. The sequence is that of D-alanine--D-alanine ligase from Thermosipho melanesiensis (strain DSM 12029 / CIP 104789 / BI429).